The chain runs to 51 residues: uncharacterized protein (51 aa).

It to E.coli YdfA.

This is an uncharacterized protein from Escherichia coli O157:H7.